The chain runs to 332 residues: Putative D-threonate 4-phosphate dehydrogenase (332 aa).

Positions 138 and 139 each coordinate substrate. Residues histidine 168, histidine 211, and histidine 266 each coordinate a divalent metal cation. Lysine 274 and arginine 292 together coordinate substrate.

This sequence belongs to the PdxA family. PdxA2 subfamily. Homodimer. Requires a divalent metal cation as cofactor.

It carries out the reaction 4-O-phospho-D-threonate + NAD(+) = dihydroxyacetone phosphate + CO2 + NADH. Functionally, catalyzes the NAD-dependent oxidation and subsequent decarboxylation of D-threonate 4-phosphate to produce dihydroxyacetone phosphate (DHAP). The protein is Putative D-threonate 4-phosphate dehydrogenase of Fusobacterium nucleatum subsp. nucleatum (strain ATCC 25586 / DSM 15643 / BCRC 10681 / CIP 101130 / JCM 8532 / KCTC 2640 / LMG 13131 / VPI 4355).